The following is a 273-amino-acid chain: Anthranilate synthase beta subunit 2, chloroplastic (273 aa).

The transit peptide at 1–47 directs the protein to the chloroplast; sequence MATAARLLPKIQSPASPAVAEARRRRPSSLRLGVTSGPARTLKQKLV. Residues 15 to 35 are disordered; sequence ASPAVAEARRRRPSSLRLGVT. The region spanning 70–269 is the Glutamine amidotransferase type-1 domain; sequence PIIVIDNYDS…IKIIEGYEAL (200 aa). 121–123 is a binding site for L-glutamine; that stretch reads GPG. Residue Cys148 is the Nucleophile of the active site. L-glutamine is bound by residues Gln152 and 202–203; that span reads SL. Residues His243 and Glu245 contribute to the active site.

In terms of assembly, heterotetramer consisting of two non-identical subunits: a beta subunit and a large alpha subunit. As to expression, expressed in roots and leaves.

It localises to the plastid. The protein localises to the chloroplast. It carries out the reaction chorismate + L-glutamine = anthranilate + pyruvate + L-glutamate + H(+). Its pathway is amino-acid biosynthesis; L-tryptophan biosynthesis; L-tryptophan from chorismate: step 1/5. Its function is as follows. Part of a heterotetrameric complex that catalyzes the two-step biosynthesis of anthranilate, an intermediate in the biosynthesis of L-tryptophan. In the first step, the glutamine-binding beta subunit of anthranilate synthase (AS) provides the glutamine amidotransferase activity which generates ammonia as a substrate that, along with chorismate, is used in the second step, catalyzed by the large alpha subunit of AS to produce anthranilate. In Oryza sativa subsp. japonica (Rice), this protein is Anthranilate synthase beta subunit 2, chloroplastic.